We begin with the raw amino-acid sequence, 182 residues long: MPKQLYFSKFPVGSQVFYRTKLSAAFVNLKPILPGHVLVIPQRAVPRLKDLTPSELTDLFTSVRKVQQVIEKVFSASASNIGIQDGVDAGQTVPHVHVHIIPRKKADFSENDLVYSELEKNEGNLASLYLTGNERYAGDERPPTSMRQAIPKDEDRKPRTLEEMEKEAQWLKGYFSEEQEKE.

The 108-residue stretch at 3-110 (KQLYFSKFPV…IPRKKADFSE (108 aa)) folds into the HIT domain. Residues asparagine 28, glutamine 84, and 90-93 (GQTV) each bind substrate. Positions 95-99 (HVHVH) match the Histidine triad motif motif. Histidine 97 (tele-AMP-histidine intermediate) is an active-site residue. Position 99 (histidine 99) interacts with substrate. Positions 135–161 (RYAGDERPPTSMRQAIPKDEDRKPRTL) are disordered. The span at 150 to 161 (IPKDEDRKPRTL) shows a compositional bias: basic and acidic residues.

The enzyme catalyses P(1),P(4)-bis(5'-guanosyl) tetraphosphate + H2O = GMP + GTP + 2 H(+). Functionally, asymmetrically hydrolyzes Ap4A to yield AMP and ATP. The protein is Bis(5'-nucleosyl)-tetraphosphatase [asymmetrical] (aph1) of Schizosaccharomyces pombe (strain 972 / ATCC 24843) (Fission yeast).